A 380-amino-acid polypeptide reads, in one-letter code: Actinidain (380 aa).

An N-terminal signal peptide occupies residues 1–24 (MGLPKSFVSMSLLFFSTLLILSLA). The propeptide at 25-126 (FNAKNLTQRT…NQYEPRVGQV (102 aa)) is activation peptide. Disulfide bonds link Cys-148–Cys-191, Cys-182–Cys-224, and Cys-282–Cys-332. Cys-151 is an active-site residue. Residue Cys-151 coordinates E64. Catalysis depends on residues His-288 and Asn-308.

This sequence belongs to the peptidase C1 family. As to expression, fruit.

It carries out the reaction Specificity close to that of papain.. With respect to regulation, repressed by the active-site-directed cysteine protease inhibitor E64 (L-trans-epoxysuccinyl-leucylamide-(4-guanido)-butane) produced by Aspergillus japonicus. Cysteine protease responsible for the cleavage of kiwellin into kissper and KiTH. This Actinidia chinensis var. chinensis (Chinese soft-hair kiwi) protein is Actinidain.